The chain runs to 244 residues: Eukaryotic translation initiation factor 4E type 1B (244 aa).

The span at 1–26 (MNKVEGGGHKEEVVVKEKEVVKEKPS) shows a compositional bias: basic and acidic residues. The segment at 1–57 (MNKVEGGGHKEEVVVKEKEVVKEKPSEATAEGVQAGEAKDLPGSLKTQRRKAHREHP) is disordered. The interval 65-68 (HPLQ) is EIF4EBP1/2/3 binding. 84-85 (WQ) serves as a coordination point for mRNA. Residues 101–105 (WAVYS) form an EIF4EBP1/2/3 binding region. 130–131 (WE) serves as a coordination point for mRNA. Residues 160–167 (ETLLCLVG) form an EIF4EBP1/2/3 binding region. MRNA is bound by residues 185–190 (RTKRDK) and 233–235 (AKS).

It belongs to the eukaryotic initiation factor 4E family. As to quaternary structure, EIF4F is a multi-subunit complex, the composition of which varies with external and internal environmental conditions. It is composed of at least EIF4A, EIF4E and EIF4G.

Recognizes and binds the 7-methylguanosine-containing mRNA cap during an early step in the initiation of protein synthesis and facilitates ribosome binding by inducing the unwinding of the mRNAs secondary structures. This is Eukaryotic translation initiation factor 4E type 1B (Eif4e1b) from Mus musculus (Mouse).